Consider the following 178-residue polypeptide: Large ribosomal subunit protein bL25 (178 aa).

It belongs to the bacterial ribosomal protein bL25 family. CTC subfamily. Part of the 50S ribosomal subunit; part of the 5S rRNA/L5/L18/L25 subcomplex. Contacts the 5S rRNA. Binds to the 5S rRNA independently of L5 and L18.

In terms of biological role, this is one of the proteins that binds to the 5S RNA in the ribosome where it forms part of the central protuberance. The chain is Large ribosomal subunit protein bL25 from Helicobacter acinonychis (strain Sheeba).